Reading from the N-terminus, the 523-residue chain is 2-isopropylmalate synthase (523 aa).

In terms of domain architecture, Pyruvate carboxyltransferase spans 5-267; sequence VIIFDTTLRD…HTNINHHEIW (263 aa). Positions 14, 202, 204, and 238 each coordinate Mn(2+). The regulatory domain stretch occupies residues 392–523; it reads RLDYFSVQSG…QNKENNKETV (132 aa).

It belongs to the alpha-IPM synthase/homocitrate synthase family. LeuA type 1 subfamily. As to quaternary structure, homodimer. The cofactor is Mn(2+).

It is found in the cytoplasm. The catalysed reaction is 3-methyl-2-oxobutanoate + acetyl-CoA + H2O = (2S)-2-isopropylmalate + CoA + H(+). It functions in the pathway amino-acid biosynthesis; L-leucine biosynthesis; L-leucine from 3-methyl-2-oxobutanoate: step 1/4. In terms of biological role, catalyzes the condensation of the acetyl group of acetyl-CoA with 3-methyl-2-oxobutanoate (2-ketoisovalerate) to form 3-carboxy-3-hydroxy-4-methylpentanoate (2-isopropylmalate). The polypeptide is 2-isopropylmalate synthase (Salmonella agona (strain SL483)).